The following is a 449-amino-acid chain: Protein tweety homolog 1 (449 aa).

The Extracellular portion of the chain corresponds to 1 to 43; the sequence is MSSSHGYRASWWTYILHQVPHTNFQFEVVDNQFAPQEWPYQQA. A helical membrane pass occupies residues 44 to 64; sequence LLFLASIAGLCLAISLILICV. Over 65-86 the chain is Cytoplasmic; it reads YLIRFCCCSSQEDDDSKSHRVC. A helical transmembrane segment spans residues 87 to 107; it reads CVTWSCVAAVIICCAGIGIGF. Over 108-212 the chain is Extracellular; sequence YGNSETNDGV…QVNFIEDYRW (105 aa). Asn128 is a glycosylation site (N-linked (GlcNAc...) asparagine). The helical transmembrane segment at 213–233 threads the bilayer; it reads LAYILLLLLDLIICLFTLLGL. The Cytoplasmic segment spans residues 234–238; the sequence is AKQIK. The chain crosses the membrane as a helical span at residues 239–259; that stretch reads WLVIVMTVVSFFVLLLSWGSM. Over 260–388 the chain is Extracellular; the sequence is GLEMATAVGL…LKGLCYDGME (129 aa). 2 disulfides stabilise this stretch: Cys273-Cys383 and Cys301-Cys368. 2 N-linked (GlcNAc...) asparagine glycosylation sites follow: Asn282 and Asn353. A helical membrane pass occupies residues 389–409; it reads GILFLLLFSFLSALSFTAAIC. Residues 410-449 are Cytoplasmic-facing; that stretch reads SLPRAWKRFQNRDLDYDDMDEDDPFNPQESKRFVQWQSSI.

The protein belongs to the tweety family. As to quaternary structure, homotetramer; disulfide-linked. Homodimer.

It is found in the cell membrane. The enzyme catalyses chloride(in) = chloride(out). It catalyses the reaction L-glutamate(out) = L-glutamate(in). Its function is as follows. May act as a calcium-independent, swelling-dependent volume-regulated anion channel (VRAC-swell) which plays a pivotal role in the process of regulatory volume decrease (RVD) in the brain through the efflux of anions like chloride and organic osmolytes like glutamate. The sequence is that of Protein tweety homolog 1 (ttyh1) from Xenopus tropicalis (Western clawed frog).